Consider the following 921-residue polypeptide: Guanylate kinase-associated protein mars (921 aa).

The residue at position 49 (S49) is a Phosphoserine. T51 carries the phosphothreonine modification. Residues S76 and S170 each carry the phosphoserine modification. Y172 is modified (phosphotyrosine). 2 disordered regions span residues 179 to 208 (GKGK…TVAA) and 273 to 325 (RPTP…PLGN). 2 stretches are compositionally biased toward low complexity: residues 193–208 (KPTS…TVAA) and 273–285 (RPTP…AKTP). At S444 the chain carries Phosphoserine. The interval 500–531 (QTTVKEDTGDSTLVPEGTKTPPRRESNGMPNY) is disordered. At T519 the chain carries Phosphothreonine. Position 554 is a phosphoserine (S554). 2 disordered regions span residues 641–660 (AGAT…SKPV) and 743–763 (TKVE…RHSS). S785 and S792 each carry phosphoserine. 2 disordered regions span residues 809-833 (QNAA…TKRQ) and 861-921 (ETVG…SEFM). At T826 the chain carries Phosphothreonine. A compositionally biased stretch (polar residues) spans 878–907 (EASTESGSLEQNPGRDSNQENEATPRTYTL).

The protein belongs to the SAPAP family. In terms of tissue distribution, expressed in the central nervous system and at different stages of gametogenesis. In embryos, it is expressed in central nervous system and brain. In testis, it is strongly expressed in pre-meiotic germ cells, but is not found in somatic or post-meiotic cells.

Its subcellular location is the cell membrane. The protein localises to the nucleus. It is found in the nucleoplasm. It localises to the cytoplasm. The protein resides in the cytoskeleton. Its subcellular location is the spindle. Functionally, cell cycle regulator. This Drosophila melanogaster (Fruit fly) protein is Guanylate kinase-associated protein mars (mars).